The following is a 333-amino-acid chain: D-fructose 1,6-bisphosphatase class 2/sedoheptulose 1,7-bisphosphatase (333 aa).

Residues Asp-33, Glu-57, Asp-85, and Glu-88 each coordinate Mn(2+). Substrate is bound by residues Glu-88–Thr-90, Tyr-119, Arg-164–Arg-166, and Asp-186–Asp-188. Glu-213 contacts Mn(2+).

It belongs to the FBPase class 2 family. In terms of assembly, homotetramer. It depends on Mn(2+) as a cofactor.

It catalyses the reaction beta-D-fructose 1,6-bisphosphate + H2O = beta-D-fructose 6-phosphate + phosphate. The enzyme catalyses D-sedoheptulose 1,7-bisphosphate + H2O = D-sedoheptulose 7-phosphate + phosphate. It participates in carbohydrate biosynthesis; Calvin cycle. In terms of biological role, catalyzes the hydrolysis of fructose 1,6-bisphosphate (Fru 1,6-P2) and sedoheptulose 1,7-bisphosphate (Sed 1,7-P2) to fructose 6-phosphate and sedoheptulose 7-phosphate, respectively. The chain is D-fructose 1,6-bisphosphatase class 2/sedoheptulose 1,7-bisphosphatase from Prochlorococcus marinus (strain MIT 9515).